Consider the following 135-residue polypeptide: MPSVSVWVRSLAPMTTWTRAAIGALGEDLAVKHLDSLGMRVLERNWRCRYGELDVIAEDPAARAVVFVEVKTRTTDHFGGVAEAVTPQKVRRLRRLAGLWLAGRDERWAAVRIDVIGVRIGRQATPEITHLTGVA.

The protein belongs to the UPF0102 family.

The polypeptide is UPF0102 protein Mkms_2031 (Mycobacterium sp. (strain KMS)).